The following is a 99-amino-acid chain: Protein AC150 (99 aa).

Residues 38-96 (GFSCYNKPIGVNFPHPTRCDAFYMCVGLNQKLELICPEGFEFDPDVKNCVPISDYGCTA) enclose the Chitin-binding type-2 domain. Residues Cys-73 and Cys-86 are joined by a disulfide bond.

The protein resides in the host nucleus. The protein localises to the virion. Its function is as follows. Plays a role in primary oral infection of the host. This chain is Protein AC150, found in Autographa californica nuclear polyhedrosis virus (AcMNPV).